The sequence spans 348 residues: MSRLNLTMEVLLVAFVAVFLTSQVHSDEIPYEHLMSQLQACPKECNCPPNFPNAVYCDNKGLKSIPVIPPYTWYLYLQNNLIDVLSANALRNATQLKWINLNRNKITTEGLEVDALRAMSNLVHLYMEDNLLSSIPSPLPAKLEQLRLSRNKISKIPPGVFSGMGHLTLLDLQSNKLQDDAVTEVSLKGLNNLIQINLAKNQLNSMPLGLPPTTTQIFLDGNNIEKIPAEYFKGLPKVASLRLNRNKLANGGIPKNVFNLSSILDLQLSHNQLTEVPVISSGLEHLHLDHNKIKSVNSSDICPPGVLDDHLEEKSPRLRYLRLDGNEIQPPIPRELMTCFRLLRAVVI.

Residues 1–26 form the signal peptide; it reads MSRLNLTMEVLLVAFVAVFLTSQVHS. Positions 40 to 69 constitute an LRRNT domain; the sequence is ACPKECNCPPNFPNAVYCDNKGLKSIPVIP. Disulfide bonds link Cys41–Cys47 and Cys45–Cys57. LRR repeat units lie at residues 70–92, 93–118, 119–140, 141–163, 165–189, 190–213, 215–234, 235–260, 262–280, and 281–303; these read PYTW…ALRN, ATQL…ALRA, MSNL…SPLP, AKLE…VFSG, GHLT…SLKG, LNNL…LPPT, TQIF…YFKG, LPKV…VFNL, SILD…PVIS, and SGLE…DICP. N-linked (GlcNAc...) (keratan sulfate) asparagine glycosylation occurs at Asn92. Asn259 carries N-linked (GlcNAc...) (keratan sulfate) asparagine glycosylation. Asn297 is a glycosylation site (N-linked (GlcNAc...) asparagine). Cysteines 302 and 339 form a disulfide.

This sequence belongs to the small leucine-rich proteoglycan (SLRP) family. SLRP class II subfamily. Post-translationally, glycosylated. Contains keratan sulfate chains. Expressed in eye, where it is found in the corneal epithelial layer and to a lesser extent in the stromal layer (at protein level).

The protein resides in the secreted. It is found in the extracellular space. Its subcellular location is the extracellular matrix. In terms of biological role, may be important in developing and maintaining corneal transparency and for the structure of the stromal matrix. This is Keratocan from Danio rerio (Zebrafish).